A 182-amino-acid chain; its full sequence is UPF0398 protein RBAM_020340 (182 aa).

Belongs to the UPF0398 family.

The protein is UPF0398 protein RBAM_020340 of Bacillus velezensis (strain DSM 23117 / BGSC 10A6 / LMG 26770 / FZB42) (Bacillus amyloliquefaciens subsp. plantarum).